The chain runs to 422 residues: tRNA hydroxylation protein P (422 aa).

Positions 1-58 are cleaved as a signal peptide; sequence MNQVELLSPAGNLKKLKIALNYGADAVYGGVSHFSLRNRAGKEFTLETFKEGIDYAHA.

Belongs to the peptidase U32 family.

Its function is as follows. Involved in prephenate-dependent formation of 5-hydroxyuridine (ho5U) modification at position 34 in tRNAs, the first step in 5-carboxymethoxyuridine (cmo5U) biosynthesis. This chain is tRNA hydroxylation protein P, found in Helicobacter pylori (strain J99 / ATCC 700824) (Campylobacter pylori J99).